The primary structure comprises 234 residues: Endonuclease V (234 aa).

Mg(2+) contacts are provided by aspartate 36 and aspartate 104.

The protein belongs to the endonuclease V family. It depends on Mg(2+) as a cofactor.

It localises to the cytoplasm. It catalyses the reaction Endonucleolytic cleavage at apurinic or apyrimidinic sites to products with a 5'-phosphate.. DNA repair enzyme involved in the repair of deaminated bases. Selectively cleaves double-stranded DNA at the second phosphodiester bond 3' to a deoxyinosine leaving behind the intact lesion on the nicked DNA. The chain is Endonuclease V from Yersinia enterocolitica serotype O:8 / biotype 1B (strain NCTC 13174 / 8081).